The chain runs to 750 residues: Retron Eco8 OLD nuclease (750 aa).

Residues 1–173 form an ATPase domain N-terminus region; sequence MTIESIRVKN…IDLYDWNPIW (173 aa). 33–37 contributes to the ATP binding site; the sequence is NVGKS. A dimerization domain region spans residues 174–260; sequence KLISNLNSFN…TQSDGTNSNK (87 aa). The tract at residues 261 to 390 is ATPase domain C-terminus; sequence FLETLLHLLI…FSDNEARLFF (130 aa). The segment at 391–704 is toprim domain; it reads SEYIVFVEGA…SGWVTTFLNY (314 aa). A divalent metal cation contacts are provided by Glu398, Glu402, Asp450, Asp452, Ser623, and Glu641.

It belongs to the class 1 OLD nuclease family. In terms of assembly, homodimer. Requires a divalent metal cation as cofactor.

Probable nuclease member of antiviral defense system retron Eco8, composed of an reverse transcriptase (RT), this nuclease and a non-coding RNA (ncRNA) encoded between them. Expression of retron Eco8 confers protection against bacteriophages T4, T6, T7 and SECphi4, SECphi6 and SECphi18. At multiplicity of infection (MOI) of 0.02 cultures slow growth when infected with SECphi4 but do not collapse, at MOI 2 cultures collapse. When the retron is cloned in another E.coli strain synthesizes msDNA (a branched RNA linked by a 2',5'-phosphodiester bond to a single-stranded DNA). The retron transcript serves as primer and template to the reaction, and codes for the RT. The polypeptide is Retron Eco8 OLD nuclease (Escherichia coli).